Reading from the N-terminus, the 217-residue chain is uncharacterized protein (217 aa).

The N-terminal stretch at 1–32 (MPITKATPLFLRYRLKGFVFLTLLLVQGVFTA) is a signal peptide. The N-palmitoyl cysteine moiety is linked to residue C33. A lipid anchor (S-diacylglycerol cysteine) is attached at C33.

Belongs to the MG067/MG068/MG395 family.

The protein resides in the cell membrane. This is an uncharacterized protein from Mycoplasma pneumoniae (strain ATCC 29342 / M129 / Subtype 1) (Mycoplasmoides pneumoniae).